The primary structure comprises 352 residues: Ion-translocating oxidoreductase complex subunit D (352 aa).

5 helical membrane-spanning segments follow: residues 20 to 40, 42 to 62, 78 to 109, 123 to 143, and 148 to 168; these read IMLL…WFFG, GTLV…ALVL, ALLT…VIIA, PAMI…TSWL, and IAVN…GHIT. Position 187 is an FMN phosphoryl threonine (threonine 187). 5 helical membrane-spanning segments follow: residues 215-235, 242-262, 267-287, 301-321, and 322-342; these read LAGV…VWLL, WHIP…GWLF, LAAP…FFIL, LIFG…GGYP, and DGVA…DYYT.

It belongs to the NqrB/RnfD family. The complex is composed of six subunits: RsxA, RsxB, RsxC, RsxD, RsxE and RsxG. It depends on FMN as a cofactor.

It is found in the cell inner membrane. Functionally, part of a membrane-bound complex that couples electron transfer with translocation of ions across the membrane. Required to maintain the reduced state of SoxR. This is Ion-translocating oxidoreductase complex subunit D from Escherichia coli (strain SMS-3-5 / SECEC).